Here is a 246-residue protein sequence, read N- to C-terminus: Probable hydroxyethylthiazole kinase (246 aa).

M50 contacts substrate. ATP-binding residues include R125 and T145. A substrate-binding site is contributed by G172.

This sequence belongs to the Thz kinase family. Mg(2+) is required as a cofactor.

It catalyses the reaction 5-(2-hydroxyethyl)-4-methylthiazole + ATP = 4-methyl-5-(2-phosphooxyethyl)-thiazole + ADP + H(+). It participates in cofactor biosynthesis; thiamine diphosphate biosynthesis; 4-methyl-5-(2-phosphoethyl)-thiazole from 5-(2-hydroxyethyl)-4-methylthiazole: step 1/1. Catalyzes the phosphorylation of the hydroxyl group of 4-methyl-5-beta-hydroxyethylthiazole (THZ). The sequence is that of Probable hydroxyethylthiazole kinase (thiM) from Agrobacterium fabrum (strain C58 / ATCC 33970) (Agrobacterium tumefaciens (strain C58)).